The primary structure comprises 179 residues: Translation initiation factor IF-3 (179 aa).

This sequence belongs to the IF-3 family. In terms of assembly, monomer.

It localises to the cytoplasm. In terms of biological role, IF-3 binds to the 30S ribosomal subunit and shifts the equilibrium between 70S ribosomes and their 50S and 30S subunits in favor of the free subunits, thus enhancing the availability of 30S subunits on which protein synthesis initiation begins. The polypeptide is Translation initiation factor IF-3 (Buchnera aphidicola subsp. Acyrthosiphon pisum (strain 5A)).